The primary structure comprises 518 residues: Probable alginate O-acetylase AlgI (518 aa).

The next 8 membrane-spanning stretches (helical) occupy residues 2-24 (VFSS…YLSG), 39-61 (FYAW…NYWI), 78-100 (WLLL…NFGV), 115-137 (FILT…ISYI), 150-172 (NLID…VLRF), 319-341 (GLWH…WLAI), 354-373 (FNVI…WVIF), and 402-424 (ASLT…FFGL). H322 is an active-site residue. The segment at 435 to 456 (SGKSARADGPATEQPGTIKAVP) is disordered. The chain crosses the membrane as a helical span at residues 493–515 (LILLLFVASILKLSAQSFSPFLY).

The protein belongs to the membrane-bound acyltransferase family.

The protein localises to the cell inner membrane. The protein operates within glycan biosynthesis; alginate biosynthesis. Together with AlgJ and AlgF, forms an inner membrane complex which probably interacts with the alginate polymerization-transport complex and adds acetyl groups at the O-2 and O-3 positions of mannuronate residues. Acetylation of alginate is important for the architecture of biofilms and increases the ability of alginate to act as a defense barrier. The polypeptide is Probable alginate O-acetylase AlgI (algI) (Pseudomonas syringae pv. tomato (strain ATCC BAA-871 / DC3000)).